Consider the following 146-residue polypeptide: Large-conductance mechanosensitive channel (146 aa).

3 consecutive transmembrane segments (helical) span residues 21–41, 44–64, and 83–103; these read VGII…ADLI, IIGL…LGDG, and GSFI…FLLV.

This sequence belongs to the MscL family. In terms of assembly, homopentamer.

Its subcellular location is the cell inner membrane. Its function is as follows. Channel that opens in response to stretch forces in the membrane lipid bilayer. May participate in the regulation of osmotic pressure changes within the cell. The sequence is that of Large-conductance mechanosensitive channel from Cereibacter sphaeroides (strain ATCC 17029 / ATH 2.4.9) (Rhodobacter sphaeroides).